Here is a 337-residue protein sequence, read N- to C-terminus: Large ribosomal subunit protein uL3 (337 aa).

Positions 1–26 (MGHAHAPRRGSLGYSPRVRARSQKPK) are disordered.

This sequence belongs to the universal ribosomal protein uL3 family. As to quaternary structure, part of the 50S ribosomal subunit. Forms a cluster with proteins L14 and L24e.

One of the primary rRNA binding proteins, it binds directly near the 3'-end of the 23S rRNA, where it nucleates assembly of the 50S subunit. This is Large ribosomal subunit protein uL3 from Methanocella arvoryzae (strain DSM 22066 / NBRC 105507 / MRE50).